Reading from the N-terminus, the 612-residue chain is UvrABC system protein C (612 aa).

The GIY-YIG domain maps to 11-90 (TASGVYLMKG…IKKYRPRYNI (80 aa)). The UVR domain maps to 200–235 (SEVVESLQHQMAAAAERMAFEEAARLRDQLRAIEQT).

This sequence belongs to the UvrC family. In terms of assembly, interacts with UvrB in an incision complex.

Its subcellular location is the cytoplasm. In terms of biological role, the UvrABC repair system catalyzes the recognition and processing of DNA lesions. UvrC both incises the 5' and 3' sides of the lesion. The N-terminal half is responsible for the 3' incision and the C-terminal half is responsible for the 5' incision. The polypeptide is UvrABC system protein C (Syntrophotalea carbinolica (strain DSM 2380 / NBRC 103641 / GraBd1) (Pelobacter carbinolicus)).